Reading from the N-terminus, the 992-residue chain is Probable RNA-dependent RNA polymerase 3 (992 aa).

Residues 88 to 113 (PRLSPGESPVQSPRTPAKKSCRASQD) form a disordered region.

It belongs to the RdRP family.

The enzyme catalyses RNA(n) + a ribonucleoside 5'-triphosphate = RNA(n+1) + diphosphate. Probably involved in the RNA silencing pathway and required for the generation of small interfering RNAs (siRNAs). The sequence is that of Probable RNA-dependent RNA polymerase 3 (RDR3) from Arabidopsis thaliana (Mouse-ear cress).